Reading from the N-terminus, the 55-residue chain is Neurotoxin B-II (55 aa).

The residue at position 10 (P10) is a Hydroxyproline. 4 cysteine pairs are disulfide-bonded: C12–C48, C16–C52, C23–C41, and C26–C37.

Belongs to the worm B-toxin family.

The protein resides in the secreted. Functionally, this toxin increases the excitability of nerves by delaying the inactivation of the voltage-gated sodium channel (Nav). Only acts on some crustacean. Neurotoxin B-II is less abundant, but 15-fold more toxic than neurotoxin B-VI. This is Neurotoxin B-II from Cerebratulus lacteus (Milky ribbon worm).